The sequence spans 128 residues: Flagellar basal body rod protein FlgB (128 aa).

This sequence belongs to the flagella basal body rod proteins family. In terms of assembly, the basal body constitutes a major portion of the flagellar organelle and consists of a number of rings mounted on a central rod. In Gram-negative bacteria, at least four rings, L, P, S and M are present, whereas Gram-positive bacteria lack the L and P rings. The rod consists of about 26 subunits of FlgG in the distal portion, and FlgB, FlgC and FlgF build up the proximal portion of the rod with about 6 subunits each. Rod assembly occurs by export via the flagellum-specific pathway of its constituent proteins and by their incorporation into the rod structure in the probable order of FlgB, FlgC, FlgF and FlgG. Another protein, FliE, also assembles onto the stable rod structure.

It is found in the bacterial flagellum basal body. In terms of biological role, structural component of flagellum, the bacterial motility apparatus. Part of the rod structure of flagellar basal body. The protein is Flagellar basal body rod protein FlgB of Cereibacter sphaeroides (Rhodobacter sphaeroides).